We begin with the raw amino-acid sequence, 720 residues long: Engulfment and cell motility protein 2 (720 aa).

At Tyr-48 the chain carries Phosphotyrosine. The ELMO domain occupies 311-485 (AQRDIIFELR…VVREQITRAL (175 aa)). At Ser-503 the chain carries Phosphoserine. Positions 553-674 (SSFRKIGNRR…LLGKDMSSEL (122 aa)) constitute a PH domain. The short motif at 700–707 (PEAPPPIP) is the SH3-binding element. A Phosphotyrosine modification is found at Tyr-717.

Interacts with the SH3-domain of DOCK1 via its SH3-binding site. Probably part of a complex with DOCK1 and RAC1. Probably part of a complex with DOCK1 and CRK isoform CRK-II. Interacts with ARHGEF16, DOCK4 and EPHA2; mediates activation of RAC1 by EPHA2. Interacts with ADGRB3. Interacts with AUTS2; the interaction is direct. In terms of tissue distribution, widely expressed, with a higher expression in skeletal muscle, kidney and placenta.

The protein resides in the cytoplasm. Its subcellular location is the cytosol. It is found in the membrane. Its function is as follows. Involved in cytoskeletal rearrangements required for phagocytosis of apoptotic cells and cell motility. Acts in association with DOCK1 and CRK. Was initially proposed to be required in complex with DOCK1 to activate Rac Rho small GTPases. May enhance the guanine nucleotide exchange factor (GEF) activity of DOCK1. The sequence is that of Engulfment and cell motility protein 2 (ELMO2) from Homo sapiens (Human).